We begin with the raw amino-acid sequence, 293 residues long: Protein bcp-1 (293 aa).

The segment covering 1 to 12 has biased composition (basic and acidic residues); that stretch reads MGKKRSREEAQK. The tract at residues 1-35 is disordered; sequence MGKKRSREEAQKEVVQNDPTVDKMDEDSDSSDSDE. Positions 24–35 are enriched in acidic residues; the sequence is MDEDSDSSDSDE.

Belongs to the BCP1 family.

It localises to the cytoplasm. Its subcellular location is the nucleus. In terms of biological role, involved in nuclear export, actin cytoskeleton organization and vesicular transport. This is Protein bcp-1 (bcp-1) from Neurospora crassa (strain ATCC 24698 / 74-OR23-1A / CBS 708.71 / DSM 1257 / FGSC 987).